Consider the following 676-residue polypeptide: Long-chain-fatty-acid--CoA ligase 1 (676 aa).

246-257 is an ATP binding site; it reads YTSGSTGLPKGV. The short motif at 511–560 is the FACS element; it reads DGWFRTGDVGELTPEGLLRIIDRKKNLVKTQNGEYIALEKLESRYRTSSL.

The protein belongs to the ATP-dependent AMP-binding enzyme family. It depends on Mg(2+) as a cofactor.

It catalyses the reaction a long-chain fatty acid + ATP + CoA = a long-chain fatty acyl-CoA + AMP + diphosphate. Functionally, esterification, concomitant with transport, of exogenous long-chain fatty acids into metabolically active CoA thioesters for subsequent degradation or incorporation into phospholipids. It may supplement intracellular myristoyl-CoA pools from exogenous myristate. Preferentially acts on C12:0-C16:0 fatty acids with myristic and pentadecanic acid (C15:0) having the highest activities. Appears to play a role in the maintenance of cell viability during stationary phase. The chain is Long-chain-fatty-acid--CoA ligase 1 (lcf1) from Schizosaccharomyces pombe (strain 972 / ATCC 24843) (Fission yeast).